A 429-amino-acid chain; its full sequence is Adenylosuccinate synthetase (429 aa).

GTP contacts are provided by residues 12–18 (GDEGKGK) and 40–42 (GHT). The Proton acceptor role is filled by Asp13. Mg(2+) is bound by residues Asp13 and Gly40. Residues 13–16 (DEGK), 38–41 (NAGH), Thr128, Arg142, Gln223, Thr238, and Arg302 each bind IMP. His41 serves as the catalytic Proton donor. 298-304 (VNTGRPR) is a substrate binding site. GTP-binding positions include Arg304, 330–332 (KLD), and 412–414 (GVG).

This sequence belongs to the adenylosuccinate synthetase family. In terms of assembly, homodimer. The cofactor is Mg(2+).

The protein resides in the cytoplasm. The enzyme catalyses IMP + L-aspartate + GTP = N(6)-(1,2-dicarboxyethyl)-AMP + GDP + phosphate + 2 H(+). It participates in purine metabolism; AMP biosynthesis via de novo pathway; AMP from IMP: step 1/2. In terms of biological role, plays an important role in the de novo pathway of purine nucleotide biosynthesis. Catalyzes the first committed step in the biosynthesis of AMP from IMP. This Micrococcus luteus (strain ATCC 4698 / DSM 20030 / JCM 1464 / CCM 169 / CCUG 5858 / IAM 1056 / NBRC 3333 / NCIMB 9278 / NCTC 2665 / VKM Ac-2230) (Micrococcus lysodeikticus) protein is Adenylosuccinate synthetase.